A 303-amino-acid polypeptide reads, in one-letter code: UDP-3-O-acyl-N-acetylglucosamine deacetylase (303 aa).

3 residues coordinate Zn(2+): His78, His237, and Asp241. The Proton donor role is filled by His264.

It belongs to the LpxC family. Zn(2+) is required as a cofactor.

It catalyses the reaction a UDP-3-O-[(3R)-3-hydroxyacyl]-N-acetyl-alpha-D-glucosamine + H2O = a UDP-3-O-[(3R)-3-hydroxyacyl]-alpha-D-glucosamine + acetate. It participates in glycolipid biosynthesis; lipid IV(A) biosynthesis; lipid IV(A) from (3R)-3-hydroxytetradecanoyl-[acyl-carrier-protein] and UDP-N-acetyl-alpha-D-glucosamine: step 2/6. Catalyzes the hydrolysis of UDP-3-O-myristoyl-N-acetylglucosamine to form UDP-3-O-myristoylglucosamine and acetate, the committed step in lipid A biosynthesis. The chain is UDP-3-O-acyl-N-acetylglucosamine deacetylase from Saccharophagus degradans (strain 2-40 / ATCC 43961 / DSM 17024).